Here is a 289-residue protein sequence, read N- to C-terminus: Transmembrane protein 163 (289 aa).

A disordered region spans residues Met-1–Glu-65. At Met-1–Ala-88 the chain is on the cytoplasmic side. At Ser-11 the chain carries Phosphoserine. A compositionally biased stretch (pro residues) spans Thr-16 to Leu-36. The required for interaction with MCOLN1 stretch occupies residues Glu-42 to Ser-72. Phosphoserine is present on residues Ser-55, Ser-57, and Ser-61. Residues Leu-89–Val-109 traverse the membrane as a helical segment. Topologically, residues Ser-110–Ala-116 are extracellular. Residues Ser-117–Trp-137 form a helical membrane-spanning segment. Residues Arg-138 to Arg-150 are Cytoplasmic-facing. Residues Glu-151–Val-171 traverse the membrane as a helical segment. Residues Lys-172–Asp-187 lie on the Extracellular side of the membrane. A helical transmembrane segment spans residues Phe-188–Phe-208. At Met-209–Arg-217 the chain is on the cytoplasmic side. Residues Ala-218–Leu-238 form a helical membrane-spanning segment. The Extracellular portion of the chain corresponds to Ser-239–Ser-255. Residues Ile-256–Val-276 form a helical membrane-spanning segment. The Cytoplasmic portion of the chain corresponds to Pro-277–Glu-289.

This sequence belongs to the TMEM163 family. As to quaternary structure, homodimer. Interacts with MCOLN1/TRPML1. Interacts with SLC30A1, SLC30A2, SLC30A3 and SLC30A4. In terms of tissue distribution, widely expressed. High expression is detected in brain, lung and testis.

The protein localises to the cytoplasmic vesicle. It is found in the secretory vesicle. The protein resides in the synaptic vesicle membrane. It localises to the early endosome membrane. Its subcellular location is the late endosome membrane. The protein localises to the lysosome membrane. It is found in the cell membrane. The catalysed reaction is Zn(2+)(in) = Zn(2+)(out). Zinc ion transporter that mediates zinc efflux and plays a crucial role in intracellular zinc homeostasis. Binds the divalent cations Zn(2+), Ni(2+), and to a minor extent Cu(2+). Is a functional modulator of P2X purinoceptors, including P2RX1, P2RX3, P2RX4 and P2RX7. Plays a role in central nervous system development and is required for myelination, and survival and proliferation of oligodendrocytes. The polypeptide is Transmembrane protein 163 (TMEM163) (Homo sapiens (Human)).